A 650-amino-acid polypeptide reads, in one-letter code: MSSQSLYKVSGNIAANALVNNDKYKTMYQESIVNPEGFWREHGKRIDWIKPYTKIKKTSFDDHNLSINWFYDGTLNASANCLDRHLAEHSDRVAIIWEGDNASEQRKITYGELHADVCKFANALRSQGVRRGDIVTIYMPMVPEAAVAMLACARIGAVHSVVFGGFSPDSIASRVIDGKSKVIITSDEGMRGGRAIPLKRNIDDALKNPDVTTVEKVIVLKRTGGKVDWVEGRDVWWHSLMETASEYCQPEEMDAEAPLFLLYTSGSTGNPKGVLHTTGGYMVYASMTHEYVFDYKAGEVYWCTADVGWITGHSYMVYGPLANGATVLIHEGVPNHPSPARLGEMIDRHKVSILYTAPTLIRALMAEGKQHFDKFDGSSLRIMGSVGEPINPEAWRWYHEVIGHEHCPIVDTWWQTETGGILITPLPGATDTKPGSATRPFFGVQPALVDNMGNILEGENEGNLVLLDSWPGQMRTVYGDHERFVLTYFKTFRGMYFTGDGARRDEDGYYWITGRVDDVINVSGHRLGTAEVESALVSHELVAEAAVVGYPHDIKGQGIYAYVTLTRGTEETEELRQELRQWVRKEIGALATPDLIQWATGLPKTRSGKIMRRFLRKIAANEVTNLGDASTLADPAVIETLIESRLNRTE.

Residues 191–194, T311, and N335 each bind CoA; that span reads RGGR. ATP-binding positions include 387–389, 411–416, D500, and R515; these read GEP and DTWWQT. Position 523 (S523) interacts with CoA. Residue R526 coordinates ATP. Positions 537, 539, and 542 each coordinate Mg(2+). Residue R584 coordinates CoA. N6-acetyllysine is present on K609.

Belongs to the ATP-dependent AMP-binding enzyme family. The cofactor is Mg(2+). Acetylated. Deacetylation by the SIR2-homolog deacetylase activates the enzyme.

It carries out the reaction acetate + ATP + CoA = acetyl-CoA + AMP + diphosphate. In terms of biological role, catalyzes the conversion of acetate into acetyl-CoA (AcCoA), an essential intermediate at the junction of anabolic and catabolic pathways. AcsA undergoes a two-step reaction. In the first half reaction, AcsA combines acetate with ATP to form acetyl-adenylate (AcAMP) intermediate. In the second half reaction, it can then transfer the acetyl group from AcAMP to the sulfhydryl group of CoA, forming the product AcCoA. The protein is Acetyl-coenzyme A synthetase of Shewanella baltica (strain OS155 / ATCC BAA-1091).